We begin with the raw amino-acid sequence, 184 residues long: RNA 2',3'-cyclic phosphodiesterase (184 aa).

The Proton donor role is filled by His-40. 2 short sequence motifs (HXTX) span residues 40–43 (HITL) and 125–128 (HITL). The Proton acceptor role is filled by His-125.

This sequence belongs to the 2H phosphoesterase superfamily. ThpR family.

The catalysed reaction is a 3'-end 2',3'-cyclophospho-ribonucleotide-RNA + H2O = a 3'-end 2'-phospho-ribonucleotide-RNA + H(+). Hydrolyzes RNA 2',3'-cyclic phosphodiester to an RNA 2'-phosphomonoester. In vitro, ligates 5' and 3' half-tRNA molecules with 2',3'-cyclic phosphate and 5'-hydroxyl termini, respectively, to the product containing the 2'-5' phosphodiester linkage. Ligase activity requires GTP, but GTP hydrolysis is not required for the reaction, which is reversible. Ligase activity is weak compared to the phosphodiesterase activity. This chain is RNA 2',3'-cyclic phosphodiesterase, found in Pyrococcus furiosus (strain ATCC 43587 / DSM 3638 / JCM 8422 / Vc1).